We begin with the raw amino-acid sequence, 620 residues long: NADPH-dependent diflavin oxidoreductase 1 (620 aa).

A Flavodoxin-like domain is found at 6–168; the sequence is IAILYGSETG…VYSEFEKRVL (163 aa). FMN contacts are provided by residues 12–17, 59–62, and 106–115; these read SETGTA, STTG, and LGDSSYSKFN. Residues 222–475 enclose the FAD-binding FR-type domain; that stretch reads SSVKYGTVVT…LLPAGKQDRP (254 aa). FAD-binding positions include Arg380, 410-413, and 442-445; these read RFFS and GLCT. 535 to 536 lines the NADP(+) pocket; sequence SR. Trp620 serves as a coordination point for FAD.

It belongs to the NADPH-dependent diflavin oxidoreductase NDOR1 family. This sequence in the N-terminal section; belongs to the flavodoxin family. The protein in the C-terminal section; belongs to the flavoprotein pyridine nucleotide cytochrome reductase family. As to quaternary structure, interacts with DRE2; as part of the cytosolic iron-sulfur (Fe-S) protein assembly (CIA) machinery. It depends on FAD as a cofactor. Requires FMN as cofactor.

The protein localises to the cytoplasm. The protein resides in the mitochondrion. The catalysed reaction is 2 oxidized [2Fe-2S]-[protein] + NADPH = 2 reduced [2Fe-2S]-[protein] + NADP(+) + H(+). Its function is as follows. NADPH-dependent reductase which is a central component of the cytosolic iron-sulfur (Fe-S) protein assembly (CIA) machinery. Transfers electrons from NADPH via its FAD and FMN prosthetic groups to the [2Fe-2S] cluster of DRE2, another key component of the CIA machinery. In turn, this reduced cluster provides electrons for assembly of cytosolic iron-sulfur cluster proteins. Positively controls H(2)O(2)-induced cell death. This chain is NADPH-dependent diflavin oxidoreductase 1, found in Eremothecium gossypii (strain ATCC 10895 / CBS 109.51 / FGSC 9923 / NRRL Y-1056) (Yeast).